A 73-amino-acid polypeptide reads, in one-letter code: Small ribosomal subunit protein eS27 (73 aa).

Cys-28, Cys-31, Cys-47, and Cys-50 together coordinate Zn(2+). Residues 28–50 form a C4-type zinc finger; the sequence is CVDCGNEQIIFGNASTEVKCHIC.

This sequence belongs to the eukaryotic ribosomal protein eS27 family. Part of the 30S ribosomal subunit. It depends on Zn(2+) as a cofactor.

This chain is Small ribosomal subunit protein eS27, found in Methanopyrus kandleri (strain AV19 / DSM 6324 / JCM 9639 / NBRC 100938).